Reading from the N-terminus, the 288-residue chain is Sulfur carrier protein FdhD (288 aa).

Cys122 acts as the Cysteine persulfide intermediate in catalysis. A Mo-bis(molybdopterin guanine dinucleotide)-binding site is contributed by 268–273 (FVRGER).

It belongs to the FdhD family.

It localises to the cytoplasm. Functionally, required for formate dehydrogenase (FDH) activity. Acts as a sulfur carrier protein that transfers sulfur from IscS to the molybdenum cofactor prior to its insertion into FDH. The sequence is that of Sulfur carrier protein FdhD from Anaeromyxobacter dehalogenans (strain 2CP-C).